We begin with the raw amino-acid sequence, 380 residues long: Homoserine O-succinyltransferase (380 aa).

Residues 51-362 (NAVLICHALS…SKHGHDAFLL (312 aa)) enclose the AB hydrolase-1 domain. Catalysis depends on serine 157, which acts as the Nucleophile. Arginine 227 provides a ligand contact to substrate. Active-site residues include aspartate 324 and histidine 357. Aspartate 358 serves as a coordination point for substrate.

The protein belongs to the AB hydrolase superfamily. MetX family. As to quaternary structure, homodimer.

The protein resides in the cytoplasm. The enzyme catalyses L-homoserine + succinyl-CoA = O-succinyl-L-homoserine + CoA. It participates in amino-acid biosynthesis; L-methionine biosynthesis via de novo pathway; O-succinyl-L-homoserine from L-homoserine: step 1/1. Its function is as follows. Transfers a succinyl group from succinyl-CoA to L-homoserine, forming succinyl-L-homoserine. The chain is Homoserine O-succinyltransferase from Cellvibrio japonicus (strain Ueda107) (Pseudomonas fluorescens subsp. cellulosa).